A 308-amino-acid chain; its full sequence is Aspartate carbamoyltransferase catalytic subunit (308 aa).

2 residues coordinate carbamoyl phosphate: arginine 55 and threonine 56. Lysine 83 serves as a coordination point for L-aspartate. Carbamoyl phosphate contacts are provided by arginine 105, histidine 133, and glutamine 136. L-aspartate-binding residues include arginine 166 and arginine 220. Carbamoyl phosphate-binding residues include glycine 261 and proline 262.

This sequence belongs to the aspartate/ornithine carbamoyltransferase superfamily. ATCase family. As to quaternary structure, heterododecamer (2C3:3R2) of six catalytic PyrB chains organized as two trimers (C3), and six regulatory PyrI chains organized as three dimers (R2).

It carries out the reaction carbamoyl phosphate + L-aspartate = N-carbamoyl-L-aspartate + phosphate + H(+). It participates in pyrimidine metabolism; UMP biosynthesis via de novo pathway; (S)-dihydroorotate from bicarbonate: step 2/3. Functionally, catalyzes the condensation of carbamoyl phosphate and aspartate to form carbamoyl aspartate and inorganic phosphate, the committed step in the de novo pyrimidine nucleotide biosynthesis pathway. In Chlorobaculum parvum (strain DSM 263 / NCIMB 8327) (Chlorobium vibrioforme subsp. thiosulfatophilum), this protein is Aspartate carbamoyltransferase catalytic subunit.